A 561-amino-acid polypeptide reads, in one-letter code: Putative transport protein KPK_3686 (561 aa).

5 helical membrane passes run 8–28 (LLNG…LCLG), 37–57 (LGNS…HFAI), 66–86 (FMLF…SIFF), 94–114 (MLAL…GKVF), and 158–178 (HLSL…IVGA). 2 consecutive RCK C-terminal domains span residues 202–288 (LDTD…SFRN) and 292–373 (VFDR…RIGF). 5 helical membrane-spanning segments follow: residues 383–403 (LLAF…TFQF), 406–426 (FSFG…LGFL), 447–467 (FGLM…INNG), 478–498 (AGLI…AYVL), and 540–560 (AIAN…WPGL).

This sequence belongs to the AAE transporter (TC 2.A.81) family. YbjL subfamily.

It localises to the cell membrane. This chain is Putative transport protein KPK_3686, found in Klebsiella pneumoniae (strain 342).